Consider the following 299-residue polypeptide: tRNA pseudouridine synthase B (299 aa).

The Nucleophile role is filled by D45.

Belongs to the pseudouridine synthase TruB family. Type 1 subfamily.

The catalysed reaction is uridine(55) in tRNA = pseudouridine(55) in tRNA. In terms of biological role, responsible for synthesis of pseudouridine from uracil-55 in the psi GC loop of transfer RNAs. The chain is tRNA pseudouridine synthase B from Streptomyces griseus subsp. griseus (strain JCM 4626 / CBS 651.72 / NBRC 13350 / KCC S-0626 / ISP 5235).